We begin with the raw amino-acid sequence, 276 residues long: MPLMKTKPTSPGRRSMVKVVNPDLHKGKPFAPLLEPQFQKAGRNNNGHITTRHKGGGHKHHYRVVDFKRNDKDGIPAKVERLEYDPNRSANIALIVFADGERRYIPAAKGMTVGQSLMSGSEAPIKSGNNLPIRNIPVGSTIHCVEIMPGKGAQVARSAGGSAVLLAREGVYAQVRLRSGEVRRVLIECRATIGEVGNEEHSLRVIGKAGANRWRGIRPTVRGVAMNPVDHPHGGGEGKTGEGRVPVSPWGTPTKGYRTRRNKRTTSMIVQRRQKR.

Positions 224-276 are disordered; sequence VAMNPVDHPHGGGEGKTGEGRVPVSPWGTPTKGYRTRRNKRTTSMIVQRRQKR. The span at 230 to 242 shows a compositional bias: basic and acidic residues; the sequence is DHPHGGGEGKTGE.

Belongs to the universal ribosomal protein uL2 family. Part of the 50S ribosomal subunit. Forms a bridge to the 30S subunit in the 70S ribosome.

Functionally, one of the primary rRNA binding proteins. Required for association of the 30S and 50S subunits to form the 70S ribosome, for tRNA binding and peptide bond formation. It has been suggested to have peptidyltransferase activity; this is somewhat controversial. Makes several contacts with the 16S rRNA in the 70S ribosome. In Polynucleobacter asymbioticus (strain DSM 18221 / CIP 109841 / QLW-P1DMWA-1) (Polynucleobacter necessarius subsp. asymbioticus), this protein is Large ribosomal subunit protein uL2.